We begin with the raw amino-acid sequence, 227 residues long: 7-cyano-7-deazaguanine synthase (227 aa).

Position 8-18 (8-18) interacts with ATP; it reads FSGGQDSTTCL. Zn(2+) is bound by residues Cys187, Cys196, Cys199, and Cys202.

It belongs to the QueC family. The cofactor is Zn(2+).

The catalysed reaction is 7-carboxy-7-deazaguanine + NH4(+) + ATP = 7-cyano-7-deazaguanine + ADP + phosphate + H2O + H(+). The protein operates within purine metabolism; 7-cyano-7-deazaguanine biosynthesis. Functionally, catalyzes the ATP-dependent conversion of 7-carboxy-7-deazaguanine (CDG) to 7-cyano-7-deazaguanine (preQ(0)). This chain is 7-cyano-7-deazaguanine synthase, found in Aliivibrio salmonicida (strain LFI1238) (Vibrio salmonicida (strain LFI1238)).